The sequence spans 1232 residues: DNA topoisomerase 2 (1232 aa).

Residues Asn-65, Asn-94, 122–124 (SSN), 135–142 (GRHGYGAK), and 352–354 (QNK) each bind ATP. Positions 432-546 (RTLIVTEGDS…SLLNRNPGFI (115 aa)) constitute a Toprim domain. Mg(2+)-binding residues include Glu-438, Asp-515, and Asp-517. The Topo IIA-type catalytic domain occupies 681–1097 (LAHAVDGLKP…APVQMWLDEL (417 aa)). The O-(5'-phospho-DNA)-tyrosine intermediate role is filled by Tyr-771. Residues 952-961 (SLTQRIYING) form an interaction with DNA region. The segment at 1161–1184 (YVPPPPSKRPHVGQSVGGGGGGGS) is disordered. A compositionally biased stretch (gly residues) spans 1175-1184 (SVGGGGGGGS).

This sequence belongs to the type II topoisomerase family. Homodimer. The cofactor is Mg(2+). It depends on Mn(2+) as a cofactor. Requires Ca(2+) as cofactor.

Its subcellular location is the nucleus. The catalysed reaction is ATP-dependent breakage, passage and rejoining of double-stranded DNA.. Functionally, control of topological states of DNA by transient breakage and subsequent rejoining of DNA strands. Topoisomerase II makes double-strand breaks. The chain is DNA topoisomerase 2 (TOP2) from Trypanosoma cruzi.